A 122-amino-acid chain; its full sequence is Large ribosomal subunit protein uL14 (122 aa).

It belongs to the universal ribosomal protein uL14 family. Part of the 50S ribosomal subunit. Forms a cluster with proteins L3 and L19. In the 70S ribosome, L14 and L19 interact and together make contacts with the 16S rRNA in bridges B5 and B8.

Binds to 23S rRNA. Forms part of two intersubunit bridges in the 70S ribosome. In Acinetobacter baumannii (strain AB307-0294), this protein is Large ribosomal subunit protein uL14.